A 226-amino-acid chain; its full sequence is Putative N-acetylmannosamine-6-phosphate 2-epimerase (226 aa).

The protein belongs to the NanE family.

The catalysed reaction is an N-acyl-D-glucosamine 6-phosphate = an N-acyl-D-mannosamine 6-phosphate. It functions in the pathway amino-sugar metabolism; N-acetylneuraminate degradation; D-fructose 6-phosphate from N-acetylneuraminate: step 3/5. Functionally, converts N-acetylmannosamine-6-phosphate (ManNAc-6-P) to N-acetylglucosamine-6-phosphate (GlcNAc-6-P). The chain is Putative N-acetylmannosamine-6-phosphate 2-epimerase from Mycoplasma mycoides subsp. mycoides SC (strain CCUG 32753 / NCTC 10114 / PG1).